A 563-amino-acid chain; its full sequence is Delta-1-pyrroline-5-carboxylate dehydrogenase, mitochondrial (563 aa).

A mitochondrion-targeting transit peptide spans 1 to 24 (MLLPAPALRRALLSRPWTGAGLRW). Lys31 bears the N6-succinyllysine mark. Phosphoserine is present on Ser44. Lys52 is modified (N6-acetyllysine). N6-acetyllysine; alternate is present on residues Lys93, Lys99, Lys114, Lys130, and Lys175. An N6-succinyllysine; alternate mark is found at Lys93, Lys99, Lys114, Lys130, and Lys175. NAD(+)-binding positions include Ser208, Lys233, and 286-290 (GSVPT). Glu314 (proton acceptor) is an active-site residue. Lys318 carries the N6-acetyllysine modification. Lys347 is subject to N6-succinyllysine. Cys348 functions as the Nucleophile in the catalytic mechanism. 2 positions are modified to N6-acetyllysine: Lys365 and Lys376. Position 395 is an N6-succinyllysine (Lys395). Glu447 contacts NAD(+). N6-acetyllysine is present on Lys462. At Lys509 the chain carries N6-acetyllysine; alternate. Lys509 bears the N6-succinyllysine; alternate mark. Ser513 contacts substrate. N6-acetyllysine occurs at positions 531 and 552.

This sequence belongs to the aldehyde dehydrogenase family. In terms of assembly, homodimer. Highest expression is found in liver followed by skeletal muscle, kidney, heart, brain, placenta, lung and pancreas.

It localises to the mitochondrion matrix. It catalyses the reaction L-glutamate 5-semialdehyde + NAD(+) + H2O = L-glutamate + NADH + 2 H(+). Its pathway is amino-acid degradation; L-proline degradation into L-glutamate; L-glutamate from L-proline: step 2/2. Irreversible conversion of delta-1-pyrroline-5-carboxylate (P5C), derived either from proline or ornithine, to glutamate. This is a necessary step in the pathway interconnecting the urea and tricarboxylic acid cycles. The preferred substrate is glutamic gamma-semialdehyde, other substrates include succinic, glutaric and adipic semialdehydes. The chain is Delta-1-pyrroline-5-carboxylate dehydrogenase, mitochondrial (ALDH4A1) from Homo sapiens (Human).